The sequence spans 82 residues: Small ribosomal subunit protein bS18 (82 aa).

Residues 1–25 form a disordered region; it reads MADTSSSQARRPFHRRRKTCPFSGA.

It belongs to the bacterial ribosomal protein bS18 family. As to quaternary structure, part of the 30S ribosomal subunit. Forms a tight heterodimer with protein bS6.

Its function is as follows. Binds as a heterodimer with protein bS6 to the central domain of the 16S rRNA, where it helps stabilize the platform of the 30S subunit. The protein is Small ribosomal subunit protein bS18 of Agrobacterium fabrum (strain C58 / ATCC 33970) (Agrobacterium tumefaciens (strain C58)).